The following is a 315-amino-acid chain: Type II methyltransferase M.Bsp6I (315 aa).

An SAM-dependent MTase C5-type domain is found at 2–315; that stretch reads LQIASLFAGV…IAENIYKSML (314 aa). The active site involves cysteine 73.

Belongs to the class I-like SAM-binding methyltransferase superfamily. C5-methyltransferase family.

It carries out the reaction a 2'-deoxycytidine in DNA + S-adenosyl-L-methionine = a 5-methyl-2'-deoxycytidine in DNA + S-adenosyl-L-homocysteine + H(+). Functionally, a methylase that recognizes the double-stranded sequence 5'-GCNGC-3', methylates C-? on both strands, and protects the DNA from cleavage by the Bsp6I endonuclease. The sequence is that of Type II methyltransferase M.Bsp6I from Bacillus sp. (strain RFL6).